The primary structure comprises 346 residues: Biotin synthase (346 aa).

The 219-residue stretch at 38–256 (RQVQVSTLLS…IAVARIMMPT (219 aa)) folds into the Radical SAM core domain. Positions 53, 57, and 60 each coordinate [4Fe-4S] cluster. [2Fe-2S] cluster contacts are provided by cysteine 97, cysteine 128, cysteine 188, and arginine 260.

This sequence belongs to the radical SAM superfamily. Biotin synthase family. As to quaternary structure, homodimer. [4Fe-4S] cluster serves as cofactor. [2Fe-2S] cluster is required as a cofactor.

It catalyses the reaction (4R,5S)-dethiobiotin + (sulfur carrier)-SH + 2 reduced [2Fe-2S]-[ferredoxin] + 2 S-adenosyl-L-methionine = (sulfur carrier)-H + biotin + 2 5'-deoxyadenosine + 2 L-methionine + 2 oxidized [2Fe-2S]-[ferredoxin]. Its pathway is cofactor biosynthesis; biotin biosynthesis; biotin from 7,8-diaminononanoate: step 2/2. In terms of biological role, catalyzes the conversion of dethiobiotin (DTB) to biotin by the insertion of a sulfur atom into dethiobiotin via a radical-based mechanism. This is Biotin synthase from Pseudescherichia vulneris (Escherichia vulneris).